The sequence spans 425 residues: Enolase (425 aa).

Q162 contacts (2R)-2-phosphoglycerate. The active-site Proton donor is E204. Mg(2+)-binding residues include D241, E282, and D309. K334, R363, S364, and K385 together coordinate (2R)-2-phosphoglycerate. K334 serves as the catalytic Proton acceptor.

The protein belongs to the enolase family. It depends on Mg(2+) as a cofactor.

It is found in the cytoplasm. Its subcellular location is the secreted. It localises to the cell surface. It catalyses the reaction (2R)-2-phosphoglycerate = phosphoenolpyruvate + H2O. It functions in the pathway carbohydrate degradation; glycolysis; pyruvate from D-glyceraldehyde 3-phosphate: step 4/5. In terms of biological role, catalyzes the reversible conversion of 2-phosphoglycerate (2-PG) into phosphoenolpyruvate (PEP). It is essential for the degradation of carbohydrates via glycolysis. In Corynebacterium efficiens (strain DSM 44549 / YS-314 / AJ 12310 / JCM 11189 / NBRC 100395), this protein is Enolase.